Consider the following 360-residue polypeptide: Uptake hydrogenase small subunit (360 aa).

A signal peptide (tat-type signal) is located at residues 1 to 46 (MATAETFYDVIRRQGITRRSFTKFCSLTAASLGFGPGAATAMAEAL). Cys62, Cys65, Cys160, Cys194, His232, Cys235, Cys260, and Cys266 together coordinate [4Fe-4S] cluster. Residues Cys275, Cys294, and Cys297 each coordinate [3Fe-4S] cluster.

The protein belongs to the [NiFe]/[NiFeSe] hydrogenase small subunit family. As to quaternary structure, heterodimer of a large and a small subunit. The cofactor is [4Fe-4S] cluster. [3Fe-4S] cluster is required as a cofactor. Predicted to be exported by the Tat system. The position of the signal peptide cleavage has not been experimentally proven.

The protein resides in the cell membrane. The catalysed reaction is H2 + A = AH2. Functionally, this enzyme recycles the H(2) produced by nitrogenase to increase the production of ATP and to protect nitrogenase against inhibition or damage by O(2) under carbon- or phosphate-limited conditions. The polypeptide is Uptake hydrogenase small subunit (hupA) (Rhizobium leguminosarum bv. viciae).